Consider the following 380-residue polypeptide: Queuine tRNA-ribosyltransferase (380 aa).

The Proton acceptor role is filled by Asp95. Substrate contacts are provided by residues 95–99 (DSGGF), Asp149, Gln192, and Gly219. An RNA binding region spans residues 250–256 (GVGSPDA). Asp269 (nucleophile) is an active-site residue. Residues 274-278 (TRIAR) are RNA binding; important for wobble base 34 recognition. The Zn(2+) site is built by Cys307, Cys309, Cys312, and His338.

The protein belongs to the queuine tRNA-ribosyltransferase family. As to quaternary structure, homodimer. Within each dimer, one monomer is responsible for RNA recognition and catalysis, while the other monomer binds to the replacement base PreQ1. It depends on Zn(2+) as a cofactor.

The catalysed reaction is 7-aminomethyl-7-carbaguanine + guanosine(34) in tRNA = 7-aminomethyl-7-carbaguanosine(34) in tRNA + guanine. The protein operates within tRNA modification; tRNA-queuosine biosynthesis. In terms of biological role, catalyzes the base-exchange of a guanine (G) residue with the queuine precursor 7-aminomethyl-7-deazaguanine (PreQ1) at position 34 (anticodon wobble position) in tRNAs with GU(N) anticodons (tRNA-Asp, -Asn, -His and -Tyr). Catalysis occurs through a double-displacement mechanism. The nucleophile active site attacks the C1' of nucleotide 34 to detach the guanine base from the RNA, forming a covalent enzyme-RNA intermediate. The proton acceptor active site deprotonates the incoming PreQ1, allowing a nucleophilic attack on the C1' of the ribose to form the product. After dissociation, two additional enzymatic reactions on the tRNA convert PreQ1 to queuine (Q), resulting in the hypermodified nucleoside queuosine (7-(((4,5-cis-dihydroxy-2-cyclopenten-1-yl)amino)methyl)-7-deazaguanosine). This chain is Queuine tRNA-ribosyltransferase, found in Pediococcus pentosaceus (strain ATCC 25745 / CCUG 21536 / LMG 10740 / 183-1w).